A 91-amino-acid polypeptide reads, in one-letter code: UPF0223 protein SAR1071 (91 aa).

The protein belongs to the UPF0223 family.

The chain is UPF0223 protein SAR1071 from Staphylococcus aureus (strain MRSA252).